The sequence spans 133 residues: Putative HTH-type transcriptional regulator YwnA (133 aa).

The HTH rrf2-type domain occupies 1-130 (MINSRLAVAI…ASKSLKDVMN (130 aa)). Residues 24-47 (SEIIADSVNTNPVVVRRMISLLKK) constitute a DNA-binding region (H-T-H motif).

This chain is Putative HTH-type transcriptional regulator YwnA (ywnA), found in Bacillus subtilis (strain 168).